The chain runs to 538 residues: Chaperonin GroEL (538 aa).

Residues 30–33, 87–91, Gly-415, 479–481, and Asp-495 contribute to the ATP site; these read TLGP, DGTTT, and DAA.

It belongs to the chaperonin (HSP60) family. Forms a cylinder of 14 subunits composed of two heptameric rings stacked back-to-back. Interacts with the co-chaperonin GroES.

The protein localises to the cytoplasm. The enzyme catalyses ATP + H2O + a folded polypeptide = ADP + phosphate + an unfolded polypeptide.. Together with its co-chaperonin GroES, plays an essential role in assisting protein folding. The GroEL-GroES system forms a nano-cage that allows encapsulation of the non-native substrate proteins and provides a physical environment optimized to promote and accelerate protein folding. The protein is Chaperonin GroEL of Dictyoglomus thermophilum (strain ATCC 35947 / DSM 3960 / H-6-12).